Consider the following 719-residue polypeptide: Exonuclease mut-7 homolog (719 aa).

A disordered region spans residues 1–22 (MSKSNNVAPPCRQDQLGFVPAG). In terms of domain architecture, 3'-5' exonuclease spans 575 to 629 (NLANLVRLCLGKKLDKSNQFSNWAQRPLRKEQLRYAALDAFCLLEIYDAIEKQLT). Residues 644-719 (NDVRPPSDSG…FEGPNTKSVL (76 aa)) are disordered. Basic residues predominate over residues 667–678 (RRNHRDKYNKRH). 2 stretches are compositionally biased toward polar residues: residues 683–692 (DSNSGNSSRA) and 706–719 (EQQTFEGPNTKSVL).

Belongs to the mut-7 family. Mg(2+) serves as cofactor.

Possesses 3'-5' exoribonuclease activity. Required for 3'-end trimming of AGO1-bound miRNAs. The chain is Exonuclease mut-7 homolog from Aedes aegypti (Yellowfever mosquito).